The sequence spans 234 residues: MTQQLTAVVPAAGIGSRMAADRPKQYLHIAGKTILEHTIDRLFSHPAITRVIIAISQTDPYFASLPLANDPRITVVDGGAERADSVFAGLAAIDDENTWVLVHDAARPCVRLNDLERLVEAAIRSDSGAILAAPVRDTMKRGCQQINGLQGIVSTVDRNNLWHALTPQMFKVKQLKDSLQHALKEGAVITDEASALEYCGYIPQLVKGRSDNLKVTQPEDLALAGFYLEQLMKE.

It belongs to the IspD/TarI cytidylyltransferase family. IspD subfamily.

It catalyses the reaction 2-C-methyl-D-erythritol 4-phosphate + CTP + H(+) = 4-CDP-2-C-methyl-D-erythritol + diphosphate. The protein operates within isoprenoid biosynthesis; isopentenyl diphosphate biosynthesis via DXP pathway; isopentenyl diphosphate from 1-deoxy-D-xylulose 5-phosphate: step 2/6. Functionally, catalyzes the formation of 4-diphosphocytidyl-2-C-methyl-D-erythritol from CTP and 2-C-methyl-D-erythritol 4-phosphate (MEP). The polypeptide is 2-C-methyl-D-erythritol 4-phosphate cytidylyltransferase (Photobacterium profundum (strain SS9)).